A 182-amino-acid polypeptide reads, in one-letter code: Inorganic pyrophosphatase (182 aa).

Residues lysine 30, arginine 44, and tyrosine 56 each contribute to the substrate site. Mg(2+) contacts are provided by aspartate 66, aspartate 71, and aspartate 103. Position 142 (tyrosine 142) interacts with substrate.

This sequence belongs to the PPase family. In terms of assembly, homohexamer. Mg(2+) is required as a cofactor.

It is found in the cytoplasm. The enzyme catalyses diphosphate + H2O = 2 phosphate + H(+). In terms of biological role, catalyzes the hydrolysis of inorganic pyrophosphate (PPi) forming two phosphate ions. The protein is Inorganic pyrophosphatase of Buchnera aphidicola subsp. Acyrthosiphon pisum (strain APS) (Acyrthosiphon pisum symbiotic bacterium).